We begin with the raw amino-acid sequence, 263 residues long: Small ribosomal subunit protein eS4 (263 aa).

The S4 RNA-binding domain occupies 42 to 104 (LPLIVFLRNR…TGEHFRLVYD (63 aa)).

The protein belongs to the eukaryotic ribosomal protein eS4 family.

The protein is Small ribosomal subunit protein eS4 (RPS4Y1) of Pan paniscus (Pygmy chimpanzee).